The primary structure comprises 330 residues: Ketol-acid reductoisomerase (NADP(+)) (330 aa).

The KARI N-terminal Rossmann domain occupies 2 to 181 (AKVYYDNDVN…GATRAGVIET (180 aa)). Residues 25 to 28 (YGSQ), arginine 48, serine 52, and 82 to 85 (DEVQ) contribute to the NADP(+) site. Histidine 107 is an active-site residue. Glycine 133 serves as a coordination point for NADP(+). The KARI C-terminal knotted domain occupies 182–327 (TFKEETETDL…ADLRMMMPFI (146 aa)). Mg(2+)-binding residues include aspartate 190, glutamate 194, glutamate 226, and glutamate 230. Serine 251 is a binding site for substrate.

This sequence belongs to the ketol-acid reductoisomerase family. The cofactor is Mg(2+).

The catalysed reaction is (2R)-2,3-dihydroxy-3-methylbutanoate + NADP(+) = (2S)-2-acetolactate + NADPH + H(+). It catalyses the reaction (2R,3R)-2,3-dihydroxy-3-methylpentanoate + NADP(+) = (S)-2-ethyl-2-hydroxy-3-oxobutanoate + NADPH + H(+). It participates in amino-acid biosynthesis; L-isoleucine biosynthesis; L-isoleucine from 2-oxobutanoate: step 2/4. The protein operates within amino-acid biosynthesis; L-valine biosynthesis; L-valine from pyruvate: step 2/4. Its function is as follows. Involved in the biosynthesis of branched-chain amino acids (BCAA). Catalyzes an alkyl-migration followed by a ketol-acid reduction of (S)-2-acetolactate (S2AL) to yield (R)-2,3-dihydroxy-isovalerate. In the isomerase reaction, S2AL is rearranged via a Mg-dependent methyl migration to produce 3-hydroxy-3-methyl-2-ketobutyrate (HMKB). In the reductase reaction, this 2-ketoacid undergoes a metal-dependent reduction by NADPH to yield (R)-2,3-dihydroxy-isovalerate. The sequence is that of Ketol-acid reductoisomerase (NADP(+)) from Macrococcus caseolyticus (strain JCSC5402) (Macrococcoides caseolyticum).